Reading from the N-terminus, the 429-residue chain is Ribosomal RNA small subunit methyltransferase B (429 aa).

S-adenosyl-L-methionine is bound by residues 254-260 (CAAPGGK), Asp-277, Asp-303, and Asp-322. Cys-375 acts as the Nucleophile in catalysis.

Belongs to the class I-like SAM-binding methyltransferase superfamily. RsmB/NOP family.

It localises to the cytoplasm. It carries out the reaction cytidine(967) in 16S rRNA + S-adenosyl-L-methionine = 5-methylcytidine(967) in 16S rRNA + S-adenosyl-L-homocysteine + H(+). In terms of biological role, specifically methylates the cytosine at position 967 (m5C967) of 16S rRNA. This Erwinia tasmaniensis (strain DSM 17950 / CFBP 7177 / CIP 109463 / NCPPB 4357 / Et1/99) protein is Ribosomal RNA small subunit methyltransferase B.